The following is a 23-amino-acid chain: Coenzyme PQQ synthesis protein A (23 aa).

A cross-link (pyrroloquinoline quinone (Glu-Tyr)) is located at residues 15-19 (EVTMY).

Belongs to the PqqA family.

The protein operates within cofactor biosynthesis; pyrroloquinoline quinone biosynthesis. Its function is as follows. Required for coenzyme pyrroloquinoline quinone (PQQ) biosynthesis. PQQ is probably formed by cross-linking a specific glutamate to a specific tyrosine residue and excising these residues from the peptide. The sequence is that of Coenzyme PQQ synthesis protein A from Ectopseudomonas mendocina (strain ymp) (Pseudomonas mendocina).